Consider the following 232-residue polypeptide: Thiamine import ATP-binding protein ThiQ (232 aa).

Residues 2–230 (LKLTDITWLY…KASASALLGI (229 aa)) form the ABC transporter domain. An ATP-binding site is contributed by 32–39 (GPSGAGKS).

This sequence belongs to the ABC transporter superfamily. Thiamine importer (TC 3.A.1.19.1) family. As to quaternary structure, the complex is composed of two ATP-binding proteins (ThiQ), two transmembrane proteins (ThiP) and a solute-binding protein (ThiB).

Its subcellular location is the cell inner membrane. It catalyses the reaction thiamine(out) + ATP + H2O = thiamine(in) + ADP + phosphate + H(+). In terms of biological role, part of the ABC transporter complex ThiBPQ involved in thiamine import. Responsible for energy coupling to the transport system. This Escherichia coli O6:K15:H31 (strain 536 / UPEC) protein is Thiamine import ATP-binding protein ThiQ.